Here is a 193-residue protein sequence, read N- to C-terminus: Potassium-transporting ATPase KdpC subunit (193 aa).

Residues 7 to 27 (PALVLFALLSALTGLAYPLAV) traverse the membrane as a helical segment.

Belongs to the KdpC family. In terms of assembly, the system is composed of three essential subunits: KdpA, KdpB and KdpC.

It is found in the cell inner membrane. In terms of biological role, part of the high-affinity ATP-driven potassium transport (or Kdp) system, which catalyzes the hydrolysis of ATP coupled with the electrogenic transport of potassium into the cytoplasm. This subunit acts as a catalytic chaperone that increases the ATP-binding affinity of the ATP-hydrolyzing subunit KdpB by the formation of a transient KdpB/KdpC/ATP ternary complex. The chain is Potassium-transporting ATPase KdpC subunit from Variovorax paradoxus (strain S110).